Reading from the N-terminus, the 290-residue chain is Lectin-related protein (290 aa).

An N-terminal signal peptide occupies residues 1-36 (ANSNSRPHLLQTQKPFSVVLAISITFYLLLLNKVNS). N-linked (GlcNAc...) asparagine glycans are attached at residues N119, N147, and N152. Residues E161 and D163 each coordinate Mn(2+). Ca(2+) is bound by residues D163, N167, and D170. Mn(2+) is bound by residues D170 and H175.

Belongs to the leguminous lectin family. As to quaternary structure, homotetramer.

Its function is as follows. Does not have any carbohydrate binding or agglutination activity. In Cladrastis kentukea (Yellow wood), this protein is Lectin-related protein.